The chain runs to 508 residues: Photosystem II CP47 reaction center protein (508 aa).

The next 6 membrane-spanning stretches (helical) occupy residues 21–36 (SVHIMHTALVSGWAGS), 101–115 (IVFSGLCFLAAIWHW), 140–156 (GIHLFLAGVACFGFGAF), 203–218 (IAAGTLGILAGLFHLS), 237–252 (VLSSSIAAVFFAAFVV), and 457–472 (TFALLFFFGHIWHGAR).

The protein belongs to the PsbB/PsbC family. PsbB subfamily. PSII is composed of 1 copy each of membrane proteins PsbA, PsbB, PsbC, PsbD, PsbE, PsbF, PsbH, PsbI, PsbJ, PsbK, PsbL, PsbM, PsbT, PsbX, PsbY, PsbZ, Psb30/Ycf12, at least 3 peripheral proteins of the oxygen-evolving complex and a large number of cofactors. It forms dimeric complexes. Requires Binds multiple chlorophylls. PSII binds additional chlorophylls, carotenoids and specific lipids. as cofactor.

It localises to the plastid. The protein localises to the chloroplast thylakoid membrane. Its function is as follows. One of the components of the core complex of photosystem II (PSII). It binds chlorophyll and helps catalyze the primary light-induced photochemical processes of PSII. PSII is a light-driven water:plastoquinone oxidoreductase, using light energy to abstract electrons from H(2)O, generating O(2) and a proton gradient subsequently used for ATP formation. The polypeptide is Photosystem II CP47 reaction center protein (Oryza nivara (Indian wild rice)).